A 54-amino-acid polypeptide reads, in one-letter code: Large ribosomal subunit protein bL33A (54 aa).

This sequence belongs to the bacterial ribosomal protein bL33 family.

This Streptomyces avermitilis (strain ATCC 31267 / DSM 46492 / JCM 5070 / NBRC 14893 / NCIMB 12804 / NRRL 8165 / MA-4680) protein is Large ribosomal subunit protein bL33A.